We begin with the raw amino-acid sequence, 329 residues long: Cytosolic arginine sensor for mTORC1 subunit 1 (329 aa).

Ser14 carries the phosphoserine; by PKB/AKT1 modification. 2 ACT domains span residues Ala72 to Ala138 and Gly260 to Gln321. L-arginine contacts are provided by residues Ser111 to Val112, Gly274, Ile280 to Val281, and Thr300 to Asp304.

This sequence belongs to the GATS family. Forms homodimers and heterodimers with CASTOR2. Interacts with the GATOR2 complex which is composed of MIOS, SEC13, SEH1L, WDR24 and WDR59; the interaction is negatively regulated by arginine. Interacts with TM4SF5; the interaction is positively regulated by leucine and is negatively regulated by arginine. Post-translationally, phosphorylation at Ser-14 by AKT1, promoting the interaction between CASTOR1 and RNF167. Ubiquitinated by RNF167 via 'Lys-29'-polyubiquitination, leading to its degradation, releasing the GATOR2 complex. Ubiquitination by RNF167 is promoted by phosphorylation at Ser-14 by AKT1. As to expression, widely expressed.

It localises to the cytoplasm. It is found in the cytosol. Its function is as follows. Functions as an intracellular arginine sensor within the amino acid-sensing branch of the TORC1 signaling pathway. As a homodimer or a heterodimer with CASTOR2, binds and inhibits the GATOR subcomplex GATOR2 and thereby mTORC1. Binding of arginine to CASTOR1 allosterically disrupts the interaction of CASTOR1-containing dimers with GATOR2 which can in turn activate mTORC1 and the TORC1 signaling pathway. This is Cytosolic arginine sensor for mTORC1 subunit 1 from Homo sapiens (Human).